We begin with the raw amino-acid sequence, 127 residues long: Large ribosomal subunit protein bL17 (127 aa).

This sequence belongs to the bacterial ribosomal protein bL17 family. In terms of assembly, part of the 50S ribosomal subunit. Contacts protein L32.

The sequence is that of Large ribosomal subunit protein bL17 from Vibrio vulnificus (strain CMCP6).